The primary structure comprises 520 residues: Cobyric acid synthase (520 aa).

The region spanning 254 to 465 (ELDIAVVRLP…IHGILDNDGL (212 aa)) is the GATase cobBQ-type domain. Cys-335 acts as the Nucleophile in catalysis. His-457 is a catalytic residue.

This sequence belongs to the CobB/CobQ family. CobQ subfamily.

The protein operates within cofactor biosynthesis; adenosylcobalamin biosynthesis. Catalyzes amidations at positions B, D, E, and G on adenosylcobyrinic A,C-diamide. NH(2) groups are provided by glutamine, and one molecule of ATP is hydrogenolyzed for each amidation. This Sorangium cellulosum (strain So ce56) (Polyangium cellulosum (strain So ce56)) protein is Cobyric acid synthase.